Reading from the N-terminus, the 609-residue chain is UvrABC system protein C (609 aa).

A GIY-YIG domain is found at 22–100; the sequence is EKPGVYQYLN…IKKYKPRYNV (79 aa). One can recognise a UVR domain in the interval 214-249; the sequence is QDISRMLVEKMQELANEMKFEEAQKIKEKYLLIENY.

This sequence belongs to the UvrC family. As to quaternary structure, interacts with UvrB in an incision complex.

It is found in the cytoplasm. The UvrABC repair system catalyzes the recognition and processing of DNA lesions. UvrC both incises the 5' and 3' sides of the lesion. The N-terminal half is responsible for the 3' incision and the C-terminal half is responsible for the 5' incision. This is UvrABC system protein C from Bacteroides thetaiotaomicron (strain ATCC 29148 / DSM 2079 / JCM 5827 / CCUG 10774 / NCTC 10582 / VPI-5482 / E50).